A 484-amino-acid chain; its full sequence is Cholesterol 22-hydroxylase CYP90B27 (484 aa).

The chain crosses the membrane as a helical span at residues 2–22 (ALELILVLSSLIVILIIFFSF). Residue cysteine 429 coordinates heme.

Belongs to the cytochrome P450 family. In terms of tissue distribution, expressed in roots.

The protein resides in the membrane. The catalysed reaction is cholesterol + reduced [NADPH--hemoprotein reductase] + O2 = (22R)-hydroxycholesterol + oxidized [NADPH--hemoprotein reductase] + H2O + H(+). Its pathway is steroid metabolism; cholesterol metabolism. Functionally, involved in the biosynthesis of steroidal saponins and alkaloids natural products from cholesterol such as spirostane-type saponins and polyphyllins, compounds with pharmacological activity. Catalyzes the C-22 hydroxylation of cholesterol to form 22R-hydroxycholesterol. This Paris polyphylla (Daiswa polyphylla) protein is Cholesterol 22-hydroxylase CYP90B27.